A 128-amino-acid polypeptide reads, in one-letter code: Keratin-associated protein 2-3 (128 aa).

The interval 5–112 is 10 X 5 AA repeats of C-C-[CDPQRWG]-[APRS]-[CIPSTVD]; it reads CCGSTLSSLS…SVQSPCCRPP (108 aa).

This sequence belongs to the KRTAP type 2 family. As to quaternary structure, interacts with hair keratins.

In terms of biological role, in the hair cortex, hair keratin intermediate filaments are embedded in an interfilamentous matrix, consisting of hair keratin-associated proteins (KRTAP), which are essential for the formation of a rigid and resistant hair shaft through their extensive disulfide bond cross-linking with abundant cysteine residues of hair keratins. The matrix proteins include the high-sulfur and high-glycine-tyrosine keratins. This Homo sapiens (Human) protein is Keratin-associated protein 2-3 (KRTAP2-3).